Here is a 499-residue protein sequence, read N- to C-terminus: Probable malate:quinone oxidoreductase 4 (499 aa).

This sequence belongs to the MQO family. FAD is required as a cofactor.

The enzyme catalyses (S)-malate + a quinone = a quinol + oxaloacetate. It participates in carbohydrate metabolism; tricarboxylic acid cycle; oxaloacetate from (S)-malate (quinone route): step 1/1. The sequence is that of Probable malate:quinone oxidoreductase 4 from Staphylococcus epidermidis (strain ATCC 12228 / FDA PCI 1200).